The chain runs to 427 residues: Enolase (427 aa).

Q163 serves as a coordination point for (2R)-2-phosphoglycerate. Catalysis depends on E205, which acts as the Proton donor. D242, E285, and D312 together coordinate Mg(2+). The (2R)-2-phosphoglycerate site is built by K337, R366, S367, and K388. K337 serves as the catalytic Proton acceptor.

The protein belongs to the enolase family. The cofactor is Mg(2+).

It localises to the cytoplasm. It is found in the secreted. The protein localises to the cell surface. It carries out the reaction (2R)-2-phosphoglycerate = phosphoenolpyruvate + H2O. It participates in carbohydrate degradation; glycolysis; pyruvate from D-glyceraldehyde 3-phosphate: step 4/5. Its function is as follows. Catalyzes the reversible conversion of 2-phosphoglycerate (2-PG) into phosphoenolpyruvate (PEP). It is essential for the degradation of carbohydrates via glycolysis. This chain is Enolase, found in Xanthobacter autotrophicus (strain ATCC BAA-1158 / Py2).